The sequence spans 407 residues: Serine hydroxymethyltransferase (407 aa).

Residues Y51 and 94–95 contribute to the pyridoxal 5'-phosphate site; that span reads GS. Residues L117 and 121 to 123 each bind (6S)-5,6,7,8-tetrahydrofolate; that span reads GHL. S172, H200, and H225 together coordinate pyridoxal 5'-phosphate. The residue at position 226 (K226) is an N6-(pyridoxal phosphate)lysine. E242 provides a ligand contact to (6S)-5,6,7,8-tetrahydrofolate. G258 is a pyridoxal 5'-phosphate binding site.

It belongs to the SHMT family. Homodimer. The cofactor is pyridoxal 5'-phosphate.

The protein resides in the cytoplasm. It carries out the reaction (6R)-5,10-methylene-5,6,7,8-tetrahydrofolate + glycine + H2O = (6S)-5,6,7,8-tetrahydrofolate + L-serine. Its pathway is one-carbon metabolism; tetrahydrofolate interconversion. The protein operates within amino-acid biosynthesis; glycine biosynthesis; glycine from L-serine: step 1/1. Functionally, catalyzes the reversible interconversion of serine and glycine with tetrahydrofolate (THF) serving as the one-carbon carrier. This reaction serves as the major source of one-carbon groups required for the biosynthesis of purines, thymidylate, methionine, and other important biomolecules. Also exhibits THF-independent aldolase activity toward beta-hydroxyamino acids, producing glycine and aldehydes, via a retro-aldol mechanism. This Thermus thermophilus (strain ATCC 27634 / DSM 579 / HB8) protein is Serine hydroxymethyltransferase.